Consider the following 350-residue polypeptide: tRNA uridine(34) hydroxylase (350 aa).

The 95-residue stretch at 146–240 folds into the Rhodanese domain; it reads DDPDALFIDM…YARKAREQGL (95 aa). The active-site Cysteine persulfide intermediate is the cysteine 200.

It belongs to the TrhO family.

The enzyme catalyses uridine(34) in tRNA + AH2 + O2 = 5-hydroxyuridine(34) in tRNA + A + H2O. Its function is as follows. Catalyzes oxygen-dependent 5-hydroxyuridine (ho5U) modification at position 34 in tRNAs. In Escherichia fergusonii (strain ATCC 35469 / DSM 13698 / CCUG 18766 / IAM 14443 / JCM 21226 / LMG 7866 / NBRC 102419 / NCTC 12128 / CDC 0568-73), this protein is tRNA uridine(34) hydroxylase.